Reading from the N-terminus, the 327-residue chain is Phenylalanine--tRNA ligase alpha subunit (327 aa).

Glu-252 contributes to the Mg(2+) binding site.

This sequence belongs to the class-II aminoacyl-tRNA synthetase family. Phe-tRNA synthetase alpha subunit type 1 subfamily. Tetramer of two alpha and two beta subunits. The cofactor is Mg(2+).

The protein resides in the cytoplasm. It carries out the reaction tRNA(Phe) + L-phenylalanine + ATP = L-phenylalanyl-tRNA(Phe) + AMP + diphosphate + H(+). This Yersinia pestis bv. Antiqua (strain Antiqua) protein is Phenylalanine--tRNA ligase alpha subunit.